We begin with the raw amino-acid sequence, 590 residues long: MQNQSVQQANISIMSSFSGSKKVYAEGSSPDIRVPMREISLSATTGAFGEEENAPVRVYDTSGPYTDPDVQIDIHEGLGALRTKWITGRGDVEEYNGRIVKPEDNGYKKEDHAAEYPGLQRKPLRAKPGKNVTQLHYARKGIITPEMEFIAIREHVSPEFVREEVASGRAIIPSNVNHPESEPMIIGRNFHVKINANIGNSAVTSSIEEEVEKMTWAIRWGADTMMDLSTGKDIHTTREWIIRNCPVPVGTVPIYQALEKVNGIAEDLTWDIYRDTLIEQAEQGVDYFTIHAGVLLRYVPLTAKRTTGIVSRGGAIMAQWCLAHHQESFLYTHFEEICEIMKTYDIAFSLGDGLRPGSIADANDEAQFAELETLGELTEIAWKHDVQVMIEGPGHVPMHKIKENMDKQLEICKEAPFYTLGPLTTDIAPGYDHITSAIGAAMIGWYGTAMLCYVTPKEHLGLPNRDDVREGVITYKIAAHAADLAKGHPGAQIRDDALSKARFEFRWRDQFHLSLDPERAMEYHDETLPAEGAKTAHFCSMCGPKFCSMRISQDIRDYAKENGLTEDEAVNEGLKEKAKEFAEKGSRLYQ.

Residues asparagine 197, methionine 226, tyrosine 255, histidine 291, 311–313 (SRG), 352–355 (DGLR), and glutamate 391 each bind substrate. Histidine 395 lines the Zn(2+) pocket. Tyrosine 418 is a substrate binding site. Residue histidine 459 coordinates Zn(2+). Positions 539, 542, and 547 each coordinate [4Fe-4S] cluster.

Belongs to the ThiC family. Requires [4Fe-4S] cluster as cofactor.

The enzyme catalyses 5-amino-1-(5-phospho-beta-D-ribosyl)imidazole + S-adenosyl-L-methionine = 4-amino-2-methyl-5-(phosphooxymethyl)pyrimidine + CO + 5'-deoxyadenosine + formate + L-methionine + 3 H(+). Its pathway is cofactor biosynthesis; thiamine diphosphate biosynthesis. Catalyzes the synthesis of the hydroxymethylpyrimidine phosphate (HMP-P) moiety of thiamine from aminoimidazole ribotide (AIR) in a radical S-adenosyl-L-methionine (SAM)-dependent reaction. The protein is Phosphomethylpyrimidine synthase of Bacillus velezensis (strain DSM 23117 / BGSC 10A6 / LMG 26770 / FZB42) (Bacillus amyloliquefaciens subsp. plantarum).